A 2196-amino-acid chain; its full sequence is Genome polyprotein (2196 aa).

Gly2 carries N-myristoyl glycine; by host lipidation. Residues Gly2–Gln1506 are Cytoplasmic-facing. The tract at residues Asp568–Val584 is amphipathic alpha-helix. Residues His883 and Asp901 each act as for protease 2A activity in the active site. 2 residues coordinate Zn(2+): Cys918 and Cys920. Cys972 serves as the catalytic For protease 2A activity. Cys978 and His980 together coordinate Zn(2+). The segment at Asn1112–Gln1184 is membrane-binding. Residues Asn1112–Thr1250 are oligomerization. Residues Ala1133–Gln1137 form an RNA-binding region. The region spanning Glu1216–Asn1372 is the SF3 helicase domain. Cys1380, Cys1392, and Cys1397 together coordinate Zn(2+). Residues Cys1380–Cys1397 form a C4-type; degenerate zinc finger. Positions Glu1424–Val1431 are RNA-binding. The segment at Leu1435 to Gln1440 is oligomerization. An intramembrane segment occupies Ala1507–Tyr1522. Topologically, residues Lys1523–Phe2196 are cytoplasmic. Tyr1532 bears the O-(5'-phospho-RNA)-tyrosine mark. In terms of domain architecture, Peptidase C3 spans Gly1552–Phe1730. Catalysis depends on for protease 3C activity residues His1591, Glu1622, and Cys1698. A RdRp catalytic domain is found at Gly1961–Leu2077. Mg(2+)-binding residues include Asp1967 and Asp2063.

The protein belongs to the picornaviruses polyprotein family. As to quaternary structure, interacts with capsid protein VP1 and capsid protein VP3 to form heterotrimeric protomers. Interacts with capsid protein VP0, and capsid protein VP3 to form heterotrimeric protomers. Five protomers subsequently associate to form pentamers which serve as building blocks for the capsid. Interacts with capsid protein VP2, capsid protein VP3 and capsid protein VP4 following cleavage of capsid protein VP0. In terms of assembly, interacts with capsid protein VP1 and capsid protein VP3 in the mature capsid. As to quaternary structure, interacts with capsid protein VP0 and capsid protein VP1 to form heterotrimeric protomers. Five protomers subsequently associate to form pentamers which serve as building blocks for the capsid. Interacts with capsid protein VP4 in the mature capsid. Interacts with protein 2C; this interaction may be important for virion morphogenesis. Interacts with capsid protein VP1 and capsid protein VP3. In terms of assembly, homodimer. As to quaternary structure, homohexamer; forms a hexameric ring structure with 6-fold symmetry characteristic of AAA+ ATPases. Interacts (via N-terminus) with host RTN3 (via reticulon domain); this interaction is important for viral replication. Interacts with capsid protein VP3; this interaction may be important for virion morphogenesis. Interacts with protein 3CD. In terms of assembly, homodimer. Interacts with host GBF1. Interacts (via GOLD domain) with host ACBD3 (via GOLD domain); this interaction allows the formation of a viral protein 3A/ACBD3 heterotetramer with a 2:2 stoichiometry, which will stimulate the recruitment of host PI4KB in order to synthesize PI4P at the viral RNA replication sites. As to quaternary structure, interacts with RNA-directed RNA polymerase. Interacts with protein 3AB and with RNA-directed RNA polymerase. In terms of assembly, interacts with Viral protein genome-linked and with protein 3CD. Mg(2+) serves as cofactor. In terms of processing, specific enzymatic cleavages in vivo by the viral proteases yield processing intermediates and the mature proteins. Post-translationally, myristoylation is required for the formation of pentamers during virus assembly. Further assembly of 12 pentamers and a molecule of genomic RNA generates the provirion. During virion maturation, immature virions are rendered infectious following cleavage of VP0 into VP4 and VP2. This maturation seems to be an autocatalytic event triggered by the presence of RNA in the capsid and it is followed by a conformational change infectious virion. In terms of processing, myristoylation is required during RNA encapsidation and formation of the mature virus particle. Post-translationally, VPg is uridylylated by the polymerase into VPg-pUpU. This acts as a nucleotide-peptide primer for the genomic RNA replication.

It localises to the virion. The protein resides in the host cytoplasm. It is found in the host cytoplasmic vesicle membrane. The protein localises to the host nucleus. The catalysed reaction is a ribonucleoside 5'-triphosphate + H2O = a ribonucleoside 5'-diphosphate + phosphate + H(+). It carries out the reaction Selective cleavage of Tyr-|-Gly bond in the picornavirus polyprotein.. The enzyme catalyses RNA(n) + a ribonucleoside 5'-triphosphate = RNA(n+1) + diphosphate. It catalyses the reaction Selective cleavage of Gln-|-Gly bond in the poliovirus polyprotein. In other picornavirus reactions Glu may be substituted for Gln, and Ser or Thr for Gly.. Its activity is regulated as follows. Replication or transcription is subject to high level of random mutations by the nucleotide analog ribavirin. Forms an icosahedral capsid of pseudo T=3 symmetry with capsid proteins VP2 and VP3. The capsid is 300 Angstroms in diameter, composed of 60 copies of each capsid protein and enclosing the viral positive strand RNA genome. Capsid protein VP1 mainly forms the vertices of the capsid. Capsid protein VP1 interacts with host cell receptor to provide virion attachment to target host cells. This attachment induces virion internalization. Tyrosine kinases are probably involved in the entry process. After binding to its receptor, the capsid undergoes conformational changes. Capsid protein VP1 N-terminus (that contains an amphipathic alpha-helix) and capsid protein VP4 are externalized. Together, they shape a pore in the host membrane through which viral genome is translocated to host cell cytoplasm. Functionally, forms an icosahedral capsid of pseudo T=3 symmetry with capsid proteins VP2 and VP3. The capsid is 300 Angstroms in diameter, composed of 60 copies of each capsid protein and enclosing the viral positive strand RNA genome. Its function is as follows. Lies on the inner surface of the capsid shell. After binding to the host receptor, the capsid undergoes conformational changes. Capsid protein VP4 is released, Capsid protein VP1 N-terminus is externalized, and together, they shape a pore in the host membrane through which the viral genome is translocated into the host cell cytoplasm. In terms of biological role, component of immature procapsids, which is cleaved into capsid proteins VP4 and VP2 after maturation. Allows the capsid to remain inactive before the maturation step. Cysteine protease that cleaves viral polyprotein and specific host proteins. It is responsible for the autocatalytic cleavage between the P1 and P2 regions, which is the first cleavage occurring in the polyprotein. Also cleaves the host translation initiation factor EIF4G1, in order to shut down the capped cellular mRNA translation. Inhibits the host nucleus-cytoplasm protein and RNA trafficking by cleaving host members of the nuclear pores. Counteracts stress granule formation probably by antagonizing its assembly or promoting its dissassembly. Functionally, plays an essential role in the virus replication cycle by acting as a viroporin. Creates a pore in the host endoplasmic reticulum and as a consequence releases Ca2+ in the cytoplasm of infected cell. In turn, high levels of cytoplasmic calcium may trigger membrane trafficking and transport of viral ER-associated proteins to viroplasms, sites of viral genome replication. Its function is as follows. Induces and associates with structural rearrangements of intracellular membranes. Displays RNA-binding, nucleotide binding and NTPase activities. May play a role in virion morphogenesis and viral RNA encapsidation by interacting with the capsid protein VP3. In terms of biological role, localizes the viral replication complex to the surface of membranous vesicles. Together with protein 3CD binds the Cis-Active RNA Element (CRE) which is involved in RNA synthesis initiation. Acts as a cofactor to stimulate the activity of 3D polymerase, maybe through a nucleid acid chaperone activity. Localizes the viral replication complex to the surface of membranous vesicles. It inhibits host cell endoplasmic reticulum-to-Golgi apparatus transport and causes the disassembly of the Golgi complex, possibly through GBF1 interaction. This would result in depletion of MHC, trail receptors and IFN receptors at the host cell surface. Plays an essential role in viral RNA replication by recruiting ACBD3 and PI4KB at the viral replication sites, thereby allowing the formation of the rearranged membranous structures where viral replication takes place. Functionally, acts as a primer for viral RNA replication and remains covalently bound to viral genomic RNA. VPg is uridylylated prior to priming replication into VPg-pUpU. The oriI viral genomic sequence may act as a template for this. The VPg-pUpU is then used as primer on the genomic RNA poly(A) by the RNA-dependent RNA polymerase to replicate the viral genome. During genome replication, the VPg-RNA linkage is removed by the host TDP2, thereby accelerating replication. During the late stage of the replication cycle, host TDP2 is excluded from sites of viral RNA synthesis and encapsidation, allowing for the generation of progeny virions. Its function is as follows. Involved in the viral replication complex and viral polypeptide maturation. It exhibits protease activity with a specificity and catalytic efficiency that is different from protease 3C. Protein 3CD lacks polymerase activity. Protein 3CD binds to the 5'UTR of the viral genome. In terms of biological role, replicates the viral genomic RNA on the surface of intracellular membranes. May form linear arrays of subunits that propagate along a strong head-to-tail interaction called interface-I. Covalently attaches UMP to a tyrosine of VPg, which is used to prime RNA synthesis. The positive stranded RNA genome is first replicated at virus induced membranous vesicles, creating a dsRNA genomic replication form. This dsRNA is then used as template to synthesize positive stranded RNA genomes. ss(+)RNA genomes are either translated, replicated or encapsidated. Major viral protease that mediates proteolytic processing of the polyprotein. Cleaves host EIF5B, contributing to host translation shutoff. Also cleaves host PABPC1, contributing to host translation shutoff. Cleaves host NLRP1, triggers host N-glycine-mediated degradation of the autoinhibitory NLRP1 N-terminal fragment. This Homo sapiens (Human) protein is Genome polyprotein.